We begin with the raw amino-acid sequence, 156 residues long: Nucleosome assembly protein 1-like 5 (156 aa).

Residues 1-16 (MADPEKQGPAESRAED) show a composition bias toward basic and acidic residues. The interval 1-58 (MADPEKQGPAESRAEDEVMEGAQGGEDAATGDSAAAPAAEEPQAPAENAPKPKKDFME) is disordered. The span at 34–49 (AAAPAAEEPQAPAENA) shows a compositional bias: low complexity. A coiled-coil region spans residues 68-94 (VLALKKLQKRCDKIEAKFDKEFQALEK). The interval 120-156 (TLEGEDDEDDEEEDDEEEEEEEEAAAGATGGPNFAKK) is disordered. Residues 122 to 143 (EGEDDEDDEEEDDEEEEEEEEA) show a composition bias toward acidic residues.

Belongs to the nucleosome assembly protein (NAP) family.

It is found in the nucleus. In Mus musculus (Mouse), this protein is Nucleosome assembly protein 1-like 5 (Nap1l5).